A 429-amino-acid chain; its full sequence is Histidine--tRNA ligase (429 aa).

This sequence belongs to the class-II aminoacyl-tRNA synthetase family. Homodimer.

It localises to the cytoplasm. The catalysed reaction is tRNA(His) + L-histidine + ATP = L-histidyl-tRNA(His) + AMP + diphosphate + H(+). The sequence is that of Histidine--tRNA ligase from Dechloromonas aromatica (strain RCB).